Here is a 262-residue protein sequence, read N- to C-terminus: Pyridoxine 5'-phosphate synthase (262 aa).

Asn-6 contributes to the 3-amino-2-oxopropyl phosphate binding site. A 1-deoxy-D-xylulose 5-phosphate-binding site is contributed by Asp-8–His-9. Arg-17 serves as a coordination point for 3-amino-2-oxopropyl phosphate. His-41 functions as the Proton acceptor in the catalytic mechanism. 1-deoxy-D-xylulose 5-phosphate is bound by residues Arg-43 and His-48. Catalysis depends on Glu-68, which acts as the Proton acceptor. Thr-98 contacts 1-deoxy-D-xylulose 5-phosphate. Catalysis depends on His-210, which acts as the Proton donor. 3-amino-2-oxopropyl phosphate-binding positions include Gly-211 and Gly-232 to Gln-233.

It belongs to the PNP synthase family. Homooctamer; tetramer of dimers.

It localises to the cytoplasm. It catalyses the reaction 3-amino-2-oxopropyl phosphate + 1-deoxy-D-xylulose 5-phosphate = pyridoxine 5'-phosphate + phosphate + 2 H2O + H(+). The protein operates within cofactor biosynthesis; pyridoxine 5'-phosphate biosynthesis; pyridoxine 5'-phosphate from D-erythrose 4-phosphate: step 5/5. Functionally, catalyzes the complicated ring closure reaction between the two acyclic compounds 1-deoxy-D-xylulose-5-phosphate (DXP) and 3-amino-2-oxopropyl phosphate (1-amino-acetone-3-phosphate or AAP) to form pyridoxine 5'-phosphate (PNP) and inorganic phosphate. The chain is Pyridoxine 5'-phosphate synthase from Campylobacter jejuni subsp. jejuni serotype O:23/36 (strain 81-176).